Consider the following 317-residue polypeptide: Zinc metalloproteinase/disintegrin (317 aa).

The propeptide occupies 1–26; the sequence is EAPKMCGVTQNWESYEPIKKASQSNL. In terms of domain architecture, Peptidase M12B spans 32–228; the sequence is RYIELVIVAD…QKPQCILNKP (197 aa). Residues Glu35 and Asp119 each coordinate Ca(2+). Cystine bridges form between Cys143-Cys223, Cys183-Cys207, and Cys185-Cys190. His168 contributes to the Zn(2+) binding site. Glu169 is an active-site residue. Zn(2+) contacts are provided by His172 and His178. Ca(2+) contacts are provided by Cys223 and Asn226. The propeptide occupies 229–244; that stretch reads LRTDTVSTPVSGNELL. The Disintegrin domain occupies 236-317; that stretch reads TPVSGNELLE…AGCPRNPFHA (82 aa). 6 cysteine pairs are disulfide-bonded: Cys250-Cys259, Cys252-Cys260, Cys265-Cys279, Cys273-Cys303, Cys278-Cys282, and Cys291-Cys310. Residues 295-297 carry the Cell attachment site motif; the sequence is RGD.

This sequence belongs to the venom metalloproteinase (M12B) family. P-II subfamily. P-IIa sub-subfamily. Monomer. It depends on Zn(2+) as a cofactor. As to expression, expressed by the venom gland.

It is found in the secreted. Its function is as follows. metalloproteinase that impairs hemostasis in the envenomed animal. Inhibits GPIIb/GPIIIa (ITGA2B/ITGB3) binding to immobilized fibrinogen with an IC(50) of 2.2 nM and ADP-induced platelet aggregation with an IC(50) of 131 nM, respectively. Inhibits angiogenesis. By binding to vitronectin receptor (alpha-V/beta-3 (ITGAV/ITGB3)), also induces apoptosis of endothelial cells by blocking their attachment to extracellular matrix proteins. In terms of biological role, inhibits platelet aggregation induced by ADP (IC(50) is 30 nM), collagen (IC(50) is 500 nM), thrombin and epinephrin (IC(50) is 160 nM). In Gloydius brevicauda (Korean slamosa snake), this protein is Zinc metalloproteinase/disintegrin.